A 521-amino-acid chain; its full sequence is Vang-like protein 2-B (521 aa).

The segment covering 1–18 has biased composition (low complexity); that stretch reads MDNDSQYSGYSYKSGQSR. Residues 1 to 73 form a disordered region; sequence MDNDSQYSGY…RDDNWGETTT (73 aa). Residues 1–108 are Cytoplasmic-facing; that stretch reads MDNDSQYSGY…AKLDCSRHLG (108 aa). Positions 19–33 are enriched in basic residues; the sequence is SSRKHRDRRERHRSK. Residues 57–67 are compositionally biased toward basic and acidic residues; sequence ESTRGEDRDDN. Residues 109–129 traverse the membrane as a helical segment; it reads VVIAGALALLSFLTPIAFMLL. Residues 130-147 lie on the Extracellular side of the membrane; it reads PQILWREDLEQCGTACEG. Residues 148-168 form a helical membrane-spanning segment; that stretch reads LFISVAFKLLILLLGSWALFF. Residues 169–178 are Cytoplasmic-facing; it reads RRPKAFFPRV. Residues 179–199 form a helical membrane-spanning segment; sequence FVFRALLMVLVFLLVVSYWLF. Topologically, residues 200 to 218 are extracellular; it reads YGVRILESRDKNYQGIVQY. A helical transmembrane segment spans residues 219–239; that stretch reads AVSLVDALLFVHYLAVVLLEL. The Cytoplasmic portion of the chain corresponds to 240-521; that stretch reads RQLQPQFTIK…VMRLQSETSV (282 aa). A PDZ-binding motif is present at residues 518-521; it reads ETSV.

This sequence belongs to the Vang family. As to quaternary structure, interacts with dvl/dsh. Interacts with prickle3. During gastrulation, broadly expressed in the dorsal region in both mesodermal and neural tissues. From the neurula stages, expressed throughout the neural tube. In tailbud stages, expression declines in the anterior notochord but remains strong in the posterior notochord and in the neural tube. Also weakly expressed in the prenephritic region of late tailbud embryos.

Its subcellular location is the cell membrane. In terms of biological role, has a role in non-canonical Wnt/planar cell polarity (PCP) signaling; can recruit dvl/dsh and prickle from the cytoplasm to the plasma membrane. Acts in a PCP complex to regulate the polarized assembly of fibronectrin on the surface of the mesoderm during gastrulation. Regulates convergent extension in both dorsal mesoderm and neural tissue without affecting cell fate. Regulates neural fold closure during neurulation. May be required for cell surface localization of fzd3 and fzd6 in the inner ear. This is Vang-like protein 2-B (vangl2-b) from Xenopus laevis (African clawed frog).